Here is a 298-residue protein sequence, read N- to C-terminus: Elongation factor Ts (298 aa).

Residues 78–81 (TDFV) form an involved in Mg(2+) ion dislocation from EF-Tu region.

The protein belongs to the EF-Ts family.

Its subcellular location is the cytoplasm. Functionally, associates with the EF-Tu.GDP complex and induces the exchange of GDP to GTP. It remains bound to the aminoacyl-tRNA.EF-Tu.GTP complex up to the GTP hydrolysis stage on the ribosome. This chain is Elongation factor Ts, found in Mycoplasmopsis agalactiae (strain NCTC 10123 / CIP 59.7 / PG2) (Mycoplasma agalactiae).